The sequence spans 573 residues: Urease subunit alpha (573 aa).

One can recognise a Urease domain in the interval 136-573 (GAIDCHVHFI…LPMAQRYFLF (438 aa)). The Ni(2+) site is built by His141, His143, and Lys224. The residue at position 224 (Lys224) is an N6-carboxylysine. His226 is a binding site for substrate. 2 residues coordinate Ni(2+): His253 and His279. The active-site Proton donor is the His327. A Ni(2+)-binding site is contributed by Asp367.

It belongs to the metallo-dependent hydrolases superfamily. Urease alpha subunit family. In terms of assembly, heterotrimer of UreA (gamma), UreB (beta) and UreC (alpha) subunits. Three heterotrimers associate to form the active enzyme. The cofactor is Ni cation. Post-translationally, carboxylation allows a single lysine to coordinate two nickel ions.

It is found in the cytoplasm. It carries out the reaction urea + 2 H2O + H(+) = hydrogencarbonate + 2 NH4(+). Its pathway is nitrogen metabolism; urea degradation; CO(2) and NH(3) from urea (urease route): step 1/1. In Nocardia farcinica (strain IFM 10152), this protein is Urease subunit alpha.